A 454-amino-acid chain; its full sequence is uncharacterized protein (454 aa).

The HNH domain occupies 364–405 (CSRPGCDAPAYHSEVHHVTPWTTTHRTDINDLTLACGPDNRL).

The protein belongs to the Rv1128c/1148c/1588c/1702c/1945/3466 family.

This is an uncharacterized protein from Mycobacterium tuberculosis (strain ATCC 25618 / H37Rv).